A 391-amino-acid polypeptide reads, in one-letter code: Na(+)/H(+) antiporter NhaA 1 (391 aa).

Transmembrane regions (helical) follow at residues 25 to 45, 56 to 76, 98 to 118, 128 to 148, 157 to 177, 180 to 200, 208 to 228, 264 to 284, 297 to 317, 335 to 355, and 364 to 384; these read AGGIVLMVAALAALIVANSPL, VWLGLSVELWINDGLMAIFFL, ALPGFAAAGGMLVPALIYIAI, GWAIPAATDIAFALGVLSLLG, VFLAALAILDDLGAVTIIAFF, AGLNLPMLAAAFVTLAVLIVM, LLPYLLLGALLWFFVLQSGVH, VAFAVVPIFGFANAGVSLAGI, VALGLFVGKQIGVFLAAVLAI, GVAMLCGIGFTMSLFIGNLAF, and EVKVGVLIGSGLAAIAGIVLL.

The protein belongs to the NhaA Na(+)/H(+) (TC 2.A.33) antiporter family.

The protein localises to the cell inner membrane. It catalyses the reaction Na(+)(in) + 2 H(+)(out) = Na(+)(out) + 2 H(+)(in). Na(+)/H(+) antiporter that extrudes sodium in exchange for external protons. This is Na(+)/H(+) antiporter NhaA 1 from Pseudomonas syringae pv. syringae (strain B728a).